A 396-amino-acid chain; its full sequence is Purine ribonucleoside efflux pump NepI (396 aa).

Residues 1-21 (MSEFIAENRGADAITRPNWSA) lie on the Cytoplasmic side of the membrane. The helical transmembrane segment at 22–42 (VFSVAFCVACLIIVEFLPVSL) threads the bilayer. Residues 43 to 54 (LTPMAQDLGISE) are Periplasmic-facing. A helical transmembrane segment spans residues 55 to 75 (GVAGQSVTVTAFVAMFASLFI). Over 76–85 (TQTIQATDRC) the chain is Cytoplasmic. The chain crosses the membrane as a helical span at residues 86 to 106 (YVVILFAVLLTLSCLLVSFAN). Ser107 is a topological domain (periplasmic). A helical membrane pass occupies residues 108-128 (FSLLLIGRACLGLALGGFWAM). At 129–147 (SASLTMRLVPPRTVPKALS) the chain is on the cytoplasmic side. The helical transmembrane segment at 148–168 (VIFGAVSIALVIAAPLGSFLG) threads the bilayer. The Periplasmic portion of the chain corresponds to 169 to 175 (ELIGWRN). Residues 176–196 (VFNAAAVMGVLCIFWIIKSLP) traverse the membrane as a helical segment. Residues 197-215 (SLPGEPSHQKQNTFRLLQR) are Cytoplasmic-facing. Residues 216–236 (PGVMAGMIAIFMSFAGQFAFF) form a helical membrane-spanning segment. Topologically, residues 237 to 255 (TYIRPVYMNLAGFGVDGLT) are periplasmic. The chain crosses the membrane as a helical span at residues 256 to 276 (LVLLSFGIASFIGTSLSSFIL). Residues 277-281 (KRSVK) are Cytoplasmic-facing. The chain crosses the membrane as a helical span at residues 282–302 (LALAGAPLILAVSALVLTLWG). The Periplasmic segment spans residues 303 to 305 (SDK). Residues 306-326 (IVATGVAIIWGLTFALVPVGW) traverse the membrane as a helical segment. At 327-343 (STWITRSLADQAEKAGS) the chain is on the cytoplasmic side. A helical transmembrane segment spans residues 344–364 (IQVAVIQLANTCGAAIGGYAL). Residues 365 to 366 (DN) are Periplasmic-facing. Residues 367–387 (IGLTSPLMLSGTLMLLTALLV) form a helical membrane-spanning segment. Residues 388–396 (TAKVKMKKS) lie on the Cytoplasmic side of the membrane.

This sequence belongs to the major facilitator superfamily. DHA1 family. NepI (TC 2.A.1.2.26) subfamily.

It is found in the cell inner membrane. The catalysed reaction is inosine(in) + H(+)(out) = inosine(out) + H(+)(in). It catalyses the reaction guanosine(in) + H(+)(out) = guanosine(out) + H(+)(in). Involved in the efflux of purine ribonucleosides, such as inosine and guanosine. This chain is Purine ribonucleoside efflux pump NepI, found in Shigella boydii serotype 4 (strain Sb227).